The sequence spans 144 residues: MEETHDDRCMSRGDLYAYMRELINDKKWNFNLKNVWAHVHDSEFDTIRGYIRDHLDDAIIIHKDLRYKRLCHHRARIENLLKLNQSLKKEYENSISRYNGAAQESATRRNVPVRDKQRRAVAAAADRIDRKATRHCKSNRERTV.

This sequence belongs to the baculoviridae LEF-11 family.

Its function is as follows. Involved in late/very late gene activation. The polypeptide is Late expression factor 11 (LEF-11) (Spodoptera litura multicapsid nucleopolyhedrovirus (SpltMNPV)).